The chain runs to 318 residues: Methionyl-tRNA formyltransferase (318 aa).

110 to 113 (SLLP) serves as a coordination point for (6S)-5,6,7,8-tetrahydrofolate.

This sequence belongs to the Fmt family.

The enzyme catalyses L-methionyl-tRNA(fMet) + (6R)-10-formyltetrahydrofolate = N-formyl-L-methionyl-tRNA(fMet) + (6S)-5,6,7,8-tetrahydrofolate + H(+). In terms of biological role, attaches a formyl group to the free amino group of methionyl-tRNA(fMet). The formyl group appears to play a dual role in the initiator identity of N-formylmethionyl-tRNA by promoting its recognition by IF2 and preventing the misappropriation of this tRNA by the elongation apparatus. In Lacticaseibacillus paracasei (strain ATCC 334 / BCRC 17002 / CCUG 31169 / CIP 107868 / KCTC 3260 / NRRL B-441) (Lactobacillus paracasei), this protein is Methionyl-tRNA formyltransferase.